Here is a 2789-residue protein sequence, read N- to C-terminus: Testis-expressed protein 15 (2789 aa).

The span at His34–Lys46 shows a compositional bias: polar residues. 5 disordered regions span residues His34–Val99, Glu169–Lys191, Phe1063–Pro1166, Lys2303–Val2331, and Lys2351–Lys2379. Basic and acidic residues predominate over residues Ser47–Ser59. Over residues Asp80–Glu98 the composition is skewed to polar residues. Residues Asn170–Gln179 show a composition bias toward basic and acidic residues. The segment covering Phe1063–Ala1077 has biased composition (basic residues). Low complexity-rich tracts occupy residues Arg1106–Ser1116 and Ser1134–Leu1160.

It belongs to the TEX15 family. Interacts with PIWIL4 and PIWIL2. In terms of tissue distribution, expressed in testis, predominantly in germ cells. Low expression, if any, in ovary. Also expressed in several cancers.

Its subcellular location is the cytoplasm. It localises to the nucleus. In terms of biological role, required during spermatogenesis for normal chromosome synapsis and meiotic recombination in germ cells. Necessary for formation of DMC1 and RAD51 foci on meiotic chromosomes, suggesting a specific role in DNA double-stranded break repair. Essential executor of PIWIL4-piRNA pathway directed transposon DNA methylation and silencing in the male embryonic germ cells. PIWIL4-piRNA binds to nascent transposon transcripts and interacts with TEX15, which may in turn recruit the epigenetic silencing machinery to the transposon loci. Not required for piRNA biosynthesis. In Homo sapiens (Human), this protein is Testis-expressed protein 15 (TEX15).